Consider the following 545-residue polypeptide: Resolvase homolog YokA (545 aa).

Positions 14 to 165 (NILGYLRRSR…GAKYTYAAQG (152 aa)) constitute a Resolvase/invertase-type recombinase catalytic domain. The stretch at 19-46 (LRRSRQDMEREKRTGEDTLTEQKELMNK) forms a coiled coil. Serine 22 (O-(5'-phospho-DNA)-serine intermediate) is an active-site residue. Positions 173-303 (PYGYQLNKKT…VKIANKVPLL (131 aa)) form a DNA-binding region, recombinase. Positions 402-475 (NMKTKKQMSE…QDTQSEIDSN (74 aa)) form a coiled coil.

The protein in the N-terminal section; belongs to the site-specific recombinase resolvase family.

The sequence is that of Resolvase homolog YokA (yokA) from Bacillus subtilis (strain 168).